The chain runs to 122 residues: Protein SPIRAL1-like 3 (122 aa).

Disordered stretches follow at residues 1–78 (MGKA…NNYF) and 96–122 (KVHAAPGGGSSLDYLFGGPSPAGSGNK). Over residues 32–61 (TMGTTTTTTTTTTTDGTGGRPITTTTTTVT) the composition is skewed to low complexity. Residue serine 73 is modified to Phosphoserine.

It belongs to the SPIRAL1 family. Ubiquitous. Preferentially expressed in above-ground organs.

Functionally, acts redundantly with SPR1 in maintaining the cortical microtubules organization essential for anisotropic cell growth. The chain is Protein SPIRAL1-like 3 (SP1L3) from Arabidopsis thaliana (Mouse-ear cress).